Here is a 276-residue protein sequence, read N- to C-terminus: Ribonuclease T2 (276 aa).

The first 17 residues, 1-17 (MGMLALGAMQLAAGAVF), serve as a signal peptide directing secretion. 5 cysteine pairs are disulfide-bonded: Cys-22/Cys-41, Cys-30/Cys-77, Cys-40/Cys-143, Cys-85/Cys-135, and Cys-208/Cys-242. The N-linked (GlcNAc...) asparagine glycan is linked to Asn-32. His-70 is a catalytic residue. Asn-93 carries an N-linked (GlcNAc...) asparagine glycan. Catalysis depends on residues Glu-128 and His-132. N-linked (GlcNAc...) asparagine glycosylation occurs at Asn-256.

It belongs to the RNase T2 family.

The catalysed reaction is a ribonucleotidyl-ribonucleotide-RNA + H2O = a 3'-end 3'-phospho-ribonucleotide-RNA + a 5'-end dephospho-ribonucleoside-RNA + H(+). The protein is Ribonuclease T2 (rntB) of Aspergillus oryzae (strain ATCC 42149 / RIB 40) (Yellow koji mold).